Consider the following 317-residue polypeptide: Ribosomal protein L11 methyltransferase (317 aa).

S-adenosyl-L-methionine is bound by residues T158, G179, D201, and N244.

It belongs to the methyltransferase superfamily. PrmA family.

It localises to the cytoplasm. The catalysed reaction is L-lysyl-[protein] + 3 S-adenosyl-L-methionine = N(6),N(6),N(6)-trimethyl-L-lysyl-[protein] + 3 S-adenosyl-L-homocysteine + 3 H(+). Methylates ribosomal protein L11. This Streptococcus pyogenes serotype M1 protein is Ribosomal protein L11 methyltransferase.